The sequence spans 763 residues: Putative alpha-1,3-mannosyltransferase MNN15 (763 aa).

At 1–7 (MRFTLKK) the chain is on the cytoplasmic side. Residues 8 to 28 (IFFVFLTLLIISIGYLLLQSV) form a helical membrane-spanning segment. The Lumenal portion of the chain corresponds to 29-763 (DLQRIRELLH…KDATTVRLRI (735 aa)). Residues N71, N157, and N169 are each glycosylated (N-linked (GlcNAc...) asparagine). A disordered region spans residues 617–659 (LVPPDLPNQREPGSPPDTKPEMEFRKSWKSRKKDTDEINEKLP). Residues 649–659 (KDTDEINEKLP) are compositionally biased toward basic and acidic residues.

The protein belongs to the MNN1/MNT family.

Its subcellular location is the golgi apparatus membrane. The protein operates within protein modification; protein glycosylation. Its function is as follows. Responsible for addition of the terminal mannose residues to the outer chain of core N-linked polysaccharides and to O-linked mannotriose. Implicated in late Golgi modifications. This is Putative alpha-1,3-mannosyltransferase MNN15 (MNN15) from Candida albicans (strain SC5314 / ATCC MYA-2876) (Yeast).